The primary structure comprises 339 residues: Glyceraldehyde-3-phosphate dehydrogenase (339 aa).

NAD(+) contacts are provided by residues arginine 13–isoleucine 14, aspartate 35, and lysine 84. D-glyceraldehyde 3-phosphate is bound by residues serine 156–threonine 158, threonine 187, threonine 216–glycine 217, and arginine 239. The Nucleophile role is filled by cysteine 157. Residue asparagine 321 coordinates NAD(+).

The protein belongs to the glyceraldehyde-3-phosphate dehydrogenase family. In terms of assembly, homotetramer.

It is found in the cytoplasm. The catalysed reaction is D-glyceraldehyde 3-phosphate + phosphate + NAD(+) = (2R)-3-phospho-glyceroyl phosphate + NADH + H(+). The protein operates within carbohydrate degradation; glycolysis; pyruvate from D-glyceraldehyde 3-phosphate: step 1/5. The protein is Glyceraldehyde-3-phosphate dehydrogenase (G3PD) of Brugia malayi (Filarial nematode worm).